Reading from the N-terminus, the 150-residue chain is 3-hydroxyacyl-[acyl-carrier-protein] dehydratase FabZ (150 aa).

H51 is a catalytic residue.

The protein belongs to the thioester dehydratase family. FabZ subfamily.

Its subcellular location is the cytoplasm. The enzyme catalyses a (3R)-hydroxyacyl-[ACP] = a (2E)-enoyl-[ACP] + H2O. Functionally, involved in unsaturated fatty acids biosynthesis. Catalyzes the dehydration of short chain beta-hydroxyacyl-ACPs and long chain saturated and unsaturated beta-hydroxyacyl-ACPs. The sequence is that of 3-hydroxyacyl-[acyl-carrier-protein] dehydratase FabZ from Legionella pneumophila subsp. pneumophila (strain Philadelphia 1 / ATCC 33152 / DSM 7513).